A 339-amino-acid polypeptide reads, in one-letter code: BTB/POZ domain-containing protein KCTD9 (339 aa).

Residues 3–82 (RVTLFLNGSP…PQTDARPPGG (80 aa)) enclose the KHA domain. Ser11 bears the Phosphoserine mark. The region spanning 89–161 (DWLTLNVGGR…LRHGQLIVND (73 aa)) is the BTB domain. 3 consecutive Pentapeptide repeat domains span residues 223-247 (ANLQ…NFED), 253-292 (ANLE…NLRG), and 293-327 (ATLA…IFEE).

Forms pentamers. Component of a complex mades of five KCTD9 and five CUL3 subunits.

Its pathway is protein modification; protein ubiquitination. Its function is as follows. Substrate-specific adapter of a BCR (BTB-CUL3-RBX1) E3 ubiquitin-protein ligase complex, which mediates the ubiquitination of target proteins, leading to their degradation by the proteasome. In Mus musculus (Mouse), this protein is BTB/POZ domain-containing protein KCTD9 (Kctd9).